The primary structure comprises 721 residues: Long-chain-fatty-acid--CoA ligase ACSBG1 (721 aa).

Residues Met-1–Glu-64 are disordered. The span at Gln-26–Glu-52 shows a compositional bias: polar residues. Residues Ser-34, Ser-50, Ser-53, and Ser-70 each carry the phosphoserine modification. Residues Thr-279–Lys-287, Ala-469–Ser-474, Asp-547, and Arg-562 contribute to the ATP site. The residue at position 655 (Tyr-655) is a Phosphotyrosine. Lys-698 is an ATP binding site.

Belongs to the ATP-dependent AMP-binding enzyme family. Bubblegum subfamily. Mainly expressed in brain. Also expressed in adrenal gland and testis. In brain, it is present in cerebral cortical and cerebellar neurons and in steroidogenic cells of the adrenal gland, testis and ovary (at protein level).

Its subcellular location is the cytoplasm. It localises to the cytoplasmic vesicle. The protein resides in the microsome. It is found in the endoplasmic reticulum. The protein localises to the cell membrane. It carries out the reaction a long-chain fatty acid + ATP + CoA = a long-chain fatty acyl-CoA + AMP + diphosphate. The enzyme catalyses (E)-hexadec-2-enoate + ATP + CoA = (2E)-hexadecenoyl-CoA + AMP + diphosphate. The catalysed reaction is hexadecanoate + ATP + CoA = hexadecanoyl-CoA + AMP + diphosphate. Its function is as follows. Catalyzes the conversion of fatty acids such as long-chain and very long-chain fatty acids to their active form acyl-CoAs for both synthesis of cellular lipids, and degradation via beta-oxidation. Can activate diverse saturated, monosaturated and polyunsaturated fatty acids. The sequence is that of Long-chain-fatty-acid--CoA ligase ACSBG1 from Mus musculus (Mouse).